Consider the following 642-residue polypeptide: Stress-activated map kinase-interacting protein 1 homolog (642 aa).

A CRIM domain is found at 189–314; that stretch reads ARIREVIGYC…EREPLFQGLL (126 aa). The disordered stretch occupies residues 603–642; that stretch reads IVSPSSDAPSRSSNGKNGGKFRKMSSLMASVMGRRKSDSK. Over residues 605-615 the composition is skewed to low complexity; the sequence is SPSSDAPSRSS.

The protein belongs to the SIN1 family. In terms of assembly, component of the target of rapamycin complex 2 (TORC2).

In terms of biological role, component of the target of rapamycin complex 2 (TORC2), which transduces signals from growth factors to pathways involved in proliferation, cytoskeletal organization and anabolic output. In response to growth factors, TORC2 phosphorylates and activates AGC protein kinase family members, such as Akt1. Within the TORC2 complex, sinh-1 acts as a substrate adapter which recognizes and binds AGC protein kinase family members for phosphorylation by mTor. This chain is Stress-activated map kinase-interacting protein 1 homolog (sinh-1), found in Caenorhabditis elegans.